A 633-amino-acid polypeptide reads, in one-letter code: Glutamyl-tRNA(Gln) amidotransferase subunit E (633 aa).

The interval 414-437 is disordered; that stretch reads ALPDGNTEYMRPLPGKARMYPETD.

Belongs to the GatB/GatE family. GatE subfamily. In terms of assembly, heterodimer of GatD and GatE.

It catalyses the reaction L-glutamyl-tRNA(Gln) + L-glutamine + ATP + H2O = L-glutaminyl-tRNA(Gln) + L-glutamate + ADP + phosphate + H(+). Its function is as follows. Allows the formation of correctly charged Gln-tRNA(Gln) through the transamidation of misacylated Glu-tRNA(Gln) in organisms which lack glutaminyl-tRNA synthetase. The reaction takes place in the presence of glutamine and ATP through an activated gamma-phospho-Glu-tRNA(Gln). The GatDE system is specific for glutamate and does not act on aspartate. The sequence is that of Glutamyl-tRNA(Gln) amidotransferase subunit E from Pyrococcus abyssi (strain GE5 / Orsay).